The chain runs to 103 residues: Regulator of rDNA transcription protein 1 (103 aa).

2 helical membrane-spanning segments follow: residues 9–33 and 40–57; these read FLPS…WVLV and VAFI…YTFF.

It localises to the membrane. In terms of biological role, identified in a screen for mutants with decreased levels of rDNA transcription. The chain is Regulator of rDNA transcription protein 1 (RRT1) from Saccharomyces cerevisiae (strain ATCC 204508 / S288c) (Baker's yeast).